A 746-amino-acid chain; its full sequence is MDFLEEPIPGVGTYDDFNTIDWVREKSRDRDRHREITNRSKESTWALIHSVSDAFSGWLLMLLIGLLSGSLAGLIDISAHWMTDLKEGICTEGFWFNHEHCCWNSQQVTFEDRDKCPEWNSWSQLIINMDEGAFAYIVNYFMYVLWALLFAFLAVSLVKVFAPYACGSGIPEIKTILSGFIIRGYLGKWTLIIKTITLVLAVSSGLSLGKEGPLVHVACCCGNILCHCFNKYRENEAKRREVLSAAAAAGVSVAFGAPIGGVLFSLEEVSYYFPLKTLWRSFFAALVAAFTLRSINPFGNSRLVLFYVEFHTPWHLFELVPFILLGIFGGLWGALFIRTNIAWCRKRKTTQLGKYPVIEVLIVTAITAILAFPNEYTRMSTSELISELFNDCGLLDSSKLCDYKNLSNTSKSGELPDRPAGAGVSSAMWQLALTLILKIVITIFTFGMKIPSGLFIPSMAVGAIAGRLLGVGMEQLAYHHRDWTIFNSWCSQGADCITPGLYAMVGAAACLGGVTRMTVSLVVIMFELTGGLEYIVPLMAAAMTSKWVADALGREGIYDAHIRLNGYPFLEAKEEFAHKTLAMDVMKPRRNDPLLTVLTQDSMTVEDVETIISETTYSGFPVVVSRESQRLVGFVLRRDLIISIENARKEQDGVVSTSIIYFTEHSPPVPPYTAPTLKLRNILDLSPFTVTDLTPMEIVVDIFRKLGLRQCLVTHNGRLLGIITKKDVLKHIAQMANQDPDSILFN.

Over 1-54 (MDFLEEPIPGVGTYDDFNTIDWVREKSRDRDRHREITNRSKESTWALIHSVSDA) the chain is Cytoplasmic. 2 consecutive transmembrane segments (helical) span residues 55-92 (FSGWLLMLLIGLLSGSLAGLIDISAHWMTDLKEGICTE) and 138-161 (VNYFMYVLWALLFAFLAVSLVKVF). The Selectivity filter part_1 signature appears at 167–171 (GSGIP). S168 is a chloride binding site. Positions 170–177 (IPEIKTIL) form an intramembrane region, helical. Helical transmembrane passes span 186 to 205 (LGKWTLIIKTITLVLAVSSG) and 211 to 230 (EGPLVHVACCCGNILCHCFN). The Selectivity filter part_2 motif lies at 209 to 213 (GKEGP). 2 consecutive intramembrane regions (helical) follow at residues 242-254 (VLSAAAAAGVSVA) and 258-266 (PIGGVLFSL). 5 helical membrane-spanning segments follow: residues 278–296 (LWRSFFAALVAAFTLRSIN), 319–344 (LVPFILLGIFGGLWGALFIRTNIAWC), 352–372 (LGKYPVIEVLIVTAITAILAF), 428–448 (MWQLALTLILKIVITIFTFGM), and 453–472 (GLFIPSMAVGAIAGRLLGVG). The short motif at 453-457 (GLFIP) is the Selectivity filter part_3 element. Residue F455 coordinates chloride. Residues 500–514 (GLYAMVGAAACLGGV) constitute an intramembrane region (helical). Positions 515 to 517 (TRM) form an intramembrane region, note=Loop between two helices. The helical intramembrane region spans 518–529 (TVSLVVIMFELT). Residues 530–534 (GGLEY) constitute an intramembrane region (note=Loop between two helices). The chain crosses the membrane as a helical span at residues 535 to 552 (IVPLMAAAMTSKWVADAL). Residues 553–746 (GREGIYDAHI…NQDPDSILFN (194 aa)) lie on the Cytoplasmic side of the membrane. Y558 serves as a coordination point for chloride. CBS domains lie at 586–650 (MKPR…ARKE) and 682–742 (ILDL…DPDS). Residues T596, 617-619 (YSG), and 724-727 (TKKD) each bind ATP.

The protein belongs to the chloride channel (TC 2.A.49) family. ClC-5/CLCN5 subfamily. As to quaternary structure, interacts with NEDD4 and NEDD4L. Post-translationally, ubiquitinated by NEDD4L in the presence of albumin; which promotes endocytosis and proteasomal degradation. In terms of tissue distribution, detected in duodenum, jejunum and ileum. Detected in crypt and villus regions of the epithelium of the small intestine.

Its subcellular location is the golgi apparatus membrane. It is found in the endosome membrane. The protein resides in the cell membrane. It catalyses the reaction 2 chloride(in) + H(+)(out) = 2 chloride(out) + H(+)(in). Proton-coupled chloride transporter. Functions as antiport system and exchanges chloride ions against protons. Important for normal acidification of the endosome lumen. May play an important role in renal tubular function. The CLC channel family contains both chloride channels and proton-coupled anion transporters that exchange chloride or another anion for protons. The absence of conserved gating glutamate residues is typical for family members that function as channels. The chain is H(+)/Cl(-) exchange transporter 5 (CLCN5) from Cavia porcellus (Guinea pig).